Consider the following 597-residue polypeptide: NADH-quinone oxidoreductase subunit C/D (597 aa).

The segment at 1-188 (MKKEIKRDDV…DPYVLNKYKE (188 aa)) is NADH dehydrogenase I subunit C. An NADH dehydrogenase I subunit D region spans residues 211–597 (KYMFLNLGPN…IDFVMSDVDR (387 aa)).

In the N-terminal section; belongs to the complex I 30 kDa subunit family. The protein in the C-terminal section; belongs to the complex I 49 kDa subunit family. In terms of assembly, NDH-1 is composed of 13 different subunits. Subunits NuoB, CD, E, F, and G constitute the peripheral sector of the complex.

The protein resides in the cell inner membrane. It catalyses the reaction a quinone + NADH + 5 H(+)(in) = a quinol + NAD(+) + 4 H(+)(out). Its function is as follows. NDH-1 shuttles electrons from NADH, via FMN and iron-sulfur (Fe-S) centers, to quinones in the respiratory chain. The immediate electron acceptor for the enzyme in this species is believed to be ubiquinone. Couples the redox reaction to proton translocation (for every two electrons transferred, four hydrogen ions are translocated across the cytoplasmic membrane), and thus conserves the redox energy in a proton gradient. This chain is NADH-quinone oxidoreductase subunit C/D, found in Buchnera aphidicola subsp. Baizongia pistaciae (strain Bp).